The primary structure comprises 518 residues: Alpha-ionylideneethane synthase abl3 (518 aa).

Disordered regions lie at residues Ala294–Glu355 and Lys440–Lys466. The span at Thr299–Asp339 shows a compositional bias: low complexity.

It belongs to the alpha-ionylideneethane synthase family.

The protein operates within hormone biosynthesis. In terms of biological role, alpha-ionylideneethane synthase involved in the biosynthesis of abscisic acid (ABA), a phytohormone that acts antagonistically toward salicylic acid (SA), jasmonic acid (JA) and ethylene (ETH) signaling, to impede plant defense responses. During pathogen-host interaction, ABA plays a dual role in disease severity by increasing plant susceptibility and accelerating pathogenesis in the fungus itself. The first step of the pathway catalyzes the reaction from farnesyl diphosphate to alpha-ionylideneethane performed by the alpha-ionylideneethane synthase ABA3 via a three-step reaction mechanism involving 2 neutral intermediates, beta-farnesene and allofarnesene. The cytochrome P450 monooxygenase ABA1 might then be involved in the conversion of alpha-ionylideneethane to alpha-ionylideneacetic acid. Alpha-ionylideneacetic acid is further converted to abscisic acid in 2 steps involving the cytochrome P450 monooxygenase ABA2 and the short-chain dehydrogenase/reductase ABA4, via the intermediates 1'-deoxy-ABA or 1',4'-trans-diol-ABA, depending on the order of action of these 2 enzymes. ABA2 is responsible for the hydroxylation of carbon atom C-1' and ABA4 might be involved in the oxidation of the C-4' carbon atom. The chain is Alpha-ionylideneethane synthase abl3 from Pyricularia oryzae (strain Y34) (Rice blast fungus).